The sequence spans 352 residues: Phosphoribosylformylglycinamidine cyclo-ligase (352 aa).

The protein belongs to the AIR synthase family.

It is found in the cytoplasm. It catalyses the reaction 2-formamido-N(1)-(5-O-phospho-beta-D-ribosyl)acetamidine + ATP = 5-amino-1-(5-phospho-beta-D-ribosyl)imidazole + ADP + phosphate + H(+). It functions in the pathway purine metabolism; IMP biosynthesis via de novo pathway; 5-amino-1-(5-phospho-D-ribosyl)imidazole from N(2)-formyl-N(1)-(5-phospho-D-ribosyl)glycinamide: step 2/2. The protein is Phosphoribosylformylglycinamidine cyclo-ligase of Ectopseudomonas mendocina (strain ymp) (Pseudomonas mendocina).